Consider the following 560-residue polypeptide: Nitrite reductase (560 aa).

The N-terminal stretch at 1–26 (MSNVGKPILAGLIAGLSLLGLAVAQA) is a signal peptide. The segment at 27–29 (AAP) is N-terminal tail. The 97-residue stretch at 30 to 126 (EMTAEEKEAS…ARYIQHTPDI (97 aa)) folds into the Cytochrome c domain. Heme c is bound by residues Cys-47, Cys-50, and His-51. The segment at 61–80 (KNLEPHWSKTEADGKKTEGG) is disordered. Over residues 63–78 (LEPHWSKTEADGKKTE) the composition is skewed to basic and acidic residues. The heme c site is built by Thr-97 and Met-101. The tract at residues 127 to 560 (PPEFSLQDMK…NVFNTMNDVY (434 aa)) is D1-heme domain. Residues His-193, Arg-236, Ser-237, Tyr-256, Arg-382, and Gln-500 each coordinate heme d1.

In terms of assembly, homodimer in solution. It depends on heme c as a cofactor. The cofactor is heme.

The protein localises to the periplasm. The catalysed reaction is nitric oxide + Fe(III)-[cytochrome c] + H2O = Fe(II)-[cytochrome c] + nitrite + 2 H(+). It carries out the reaction A + NH4(+) + H2O = hydroxylamine + AH2 + H(+). In Stutzerimonas stutzeri (Pseudomonas stutzeri), this protein is Nitrite reductase (nirS).